Here is a 704-residue protein sequence, read N- to C-terminus: MLGTSTKCSKRDCNYAKENISRIMPTIGLGYKQNFEKKTADTQSSCKLLLVALLESFCKHSDQTPEQSKQMFLYVAHSLQNSGIIDFEFSEELEPIRNAYADSLHNLLSKAFRSTLPMSSTKDSKKSRYSSPDGVLAKTASFLSVLSDGGYEDDVMNVKPSVNVLSNRLNHLPVEALESCFPQTTLESSTFADFCEHKDGTGNLSFSNFDSFPTVQRSRYASDFEELELLGKGGYGSVYKARNKFDGVEYALKKIPLRLRSFSTSSNIFRESRTLARLNHPNVIRFFSSWVELLPSSEKQIEEEPLASADETLSQSADIDNFMFDMDTGLLQHTYPSSVQILFQEDSVADDLTPCYSTKNSTCNLTDLFKKEADQDYAESHDCSSTTSQVDTLGKLAPTKSASEMLLMDSFLSEREEDECSNIPSFDQQPLCLYIQMALCEETLEKHINRRNKHIHGVMSKGLRNCYILLFARILEGVLYLHDAMHLVHRDLKPRNIFLSSGVHSEPCSVCLPNFSDEDNVEVSNAYEPVNQRTLCVVPKIGDFGLVLSQSDNLEEGTNSSAESSFVGTSTYAAPELFSKHMRSVMNNNSSTDIYALGILFFELLYPFNTRMERASAIANLKKGIFPHDFLDSMPEEASLIRSMLSSSNKRPTAAQLLTSNLFHDLVVNELHVYQALLEDAEKRNNNLKAELNILRVLNPNYDC.

One can recognise a Protein kinase domain in the interval 224–667 (FEELELLGKG…LTSNLFHDLV (444 aa)). Residues 230–238 (LGKGGYGSV) and Lys-253 contribute to the ATP site. Asp-491 (proton acceptor) is an active-site residue.

This sequence belongs to the protein kinase superfamily. Ser/Thr protein kinase family. GCN2 subfamily. Autophosphorylated.

It catalyses the reaction L-seryl-[protein] + ATP = O-phospho-L-seryl-[protein] + ADP + H(+). It carries out the reaction L-threonyl-[protein] + ATP = O-phospho-L-threonyl-[protein] + ADP + H(+). Mediates down-regulation of protein synthesis in response to stress conditions by the phosphorylation of the alpha subunit of eIF-2 (tif211) on 'Ser-52'. Protein synthesis is inhibited at the level of initiation. Activity is inhibited in the presence of heme. The polypeptide is Eukaryotic translation initiation factor 2-alpha kinase 1 (hri1) (Schizosaccharomyces pombe (strain 972 / ATCC 24843) (Fission yeast)).